Consider the following 194-residue polypeptide: Large ribosomal subunit protein eL15 (194 aa).

Residues 164 to 194 (SAGKKGRGLRNKGIGAEKVRPSIRAHGRRGK) are disordered. Over residues 184–194 (PSIRAHGRRGK) the composition is skewed to basic residues.

The protein belongs to the eukaryotic ribosomal protein eL15 family.

This Methanocaldococcus jannaschii (strain ATCC 43067 / DSM 2661 / JAL-1 / JCM 10045 / NBRC 100440) (Methanococcus jannaschii) protein is Large ribosomal subunit protein eL15 (rpl15e).